The following is an 89-amino-acid chain: Cell division protein FtsL (89 aa).

At 1–22 (MIDRKHYHLVGSIGKDILNNGK) the chain is on the cytoplasmic side. A helical transmembrane segment spans residues 23–40 (LPALLLIAVLASSSLVVI). The Periplasmic portion of the chain corresponds to 41–89 (TTYQTRRLTVEREQLLLEQNILDIEWRNLILEDNVISDQSRFEFVATEQ).

Belongs to the FtsL family. As to quaternary structure, part of a complex composed of FtsB, FtsL and FtsQ.

It is found in the cell inner membrane. Its function is as follows. Essential cell division protein. May link together the upstream cell division proteins, which are predominantly cytoplasmic, with the downstream cell division proteins, which are predominantly periplasmic. The protein is Cell division protein FtsL of Moranella endobia (strain PCIT).